A 37-amino-acid polypeptide reads, in one-letter code: Large ribosomal subunit protein bL36 (37 aa).

The protein belongs to the bacterial ribosomal protein bL36 family.

In Clostridioides difficile (strain 630) (Peptoclostridium difficile), this protein is Large ribosomal subunit protein bL36.